The sequence spans 212 residues: Secreted and transmembrane protein 1b (212 aa).

Positions 1-28 (MLAYSVTSSGLFPRMLWALLLLAASLNA) are cleaved as a signal peptide. Residues 29 to 160 (HNDVWDEPCC…DKPPTAVRTE (132 aa)) are Extracellular-facing. Cysteines 38 and 55 form a disulfide. 4 N-linked (GlcNAc...) asparagine glycosylation sites follow: Asn56, Asn85, Asn114, and Asn130. A helical transmembrane segment spans residues 161–181 (VIIIIAIATTIIITGIGVFVW). At 182–212 (YKQFPVAPQIQMSVPCLIHGSPGIPYLTLPP) the chain is on the cytoplasmic side.

Belongs to the SECTM family. As to quaternary structure, interacts with CD7.

Its subcellular location is the cell membrane. The protein resides in the secreted. In terms of biological role, may be involved in thymocyte signaling. The protein is Secreted and transmembrane protein 1b (Sectm1b) of Mus musculus (Mouse).